We begin with the raw amino-acid sequence, 219 residues long: Elongation factor Ts (219 aa).

The tract at residues 82–85 is involved in Mg(2+) ion dislocation from EF-Tu; it reads TDFV.

This sequence belongs to the EF-Ts family.

It is found in the cytoplasm. Associates with the EF-Tu.GDP complex and induces the exchange of GDP to GTP. It remains bound to the aminoacyl-tRNA.EF-Tu.GTP complex up to the GTP hydrolysis stage on the ribosome. In Anaeromyxobacter dehalogenans (strain 2CP-1 / ATCC BAA-258), this protein is Elongation factor Ts.